A 576-amino-acid polypeptide reads, in one-letter code: Aspartate--tRNA ligase (576 aa).

Glu173 lines the L-aspartate pocket. The tract at residues 197-200 is aspartate; it reads QLFK. Arg219 contributes to the L-aspartate binding site. ATP contacts are provided by residues 219 to 221 and Gln228; that span reads RDE. His438 serves as a coordination point for L-aspartate. Residue Glu470 coordinates ATP. Arg477 lines the L-aspartate pocket. 522-525 serves as a coordination point for ATP; the sequence is GLDR.

It belongs to the class-II aminoacyl-tRNA synthetase family. Type 1 subfamily. As to quaternary structure, homodimer.

The protein localises to the cytoplasm. It catalyses the reaction tRNA(Asp) + L-aspartate + ATP = L-aspartyl-tRNA(Asp) + AMP + diphosphate. Catalyzes the attachment of L-aspartate to tRNA(Asp) in a two-step reaction: L-aspartate is first activated by ATP to form Asp-AMP and then transferred to the acceptor end of tRNA(Asp). The protein is Aspartate--tRNA ligase of Aster yellows witches'-broom phytoplasma (strain AYWB).